The chain runs to 251 residues: Small ribosomal subunit protein uS2 (251 aa).

This sequence belongs to the universal ribosomal protein uS2 family.

This Deinococcus deserti (strain DSM 17065 / CIP 109153 / LMG 22923 / VCD115) protein is Small ribosomal subunit protein uS2.